The primary structure comprises 256 residues: Large ribosomal subunit protein eL8y (256 aa).

The span at 1-15 (MAPKKGVKVASKKKP) shows a compositional bias: basic residues. The interval 1–20 (MAPKKGVKVASKKKPEKVTN) is disordered.

This sequence belongs to the eukaryotic ribosomal protein eL8 family.

The sequence is that of Large ribosomal subunit protein eL8y (RPL7AB) from Arabidopsis thaliana (Mouse-ear cress).